We begin with the raw amino-acid sequence, 423 residues long: D-tagatose-1,6-bisphosphate aldolase subunit GatZ (423 aa).

This sequence belongs to the GatZ/KbaZ family. GatZ subfamily. In terms of assembly, forms a complex with GatY.

It participates in carbohydrate metabolism; D-tagatose 6-phosphate degradation; D-glyceraldehyde 3-phosphate and glycerone phosphate from D-tagatose 6-phosphate: step 2/2. In terms of biological role, component of the tagatose-1,6-bisphosphate aldolase GatYZ that is required for full activity and stability of the Y subunit. Could have a chaperone-like function for the proper and stable folding of GatY. When expressed alone, GatZ does not show any aldolase activity. Is involved in the catabolism of galactitol. The polypeptide is D-tagatose-1,6-bisphosphate aldolase subunit GatZ (Klebsiella pneumoniae subsp. pneumoniae (strain ATCC 700721 / MGH 78578)).